A 123-amino-acid chain; its full sequence is Small ribosomal subunit protein uS12 (123 aa).

The interval Met1–Gly32 is disordered. Residues Arg9–Lys18 are compositionally biased toward basic residues. Asp89 bears the 3-methylthioaspartic acid mark.

The protein belongs to the universal ribosomal protein uS12 family. As to quaternary structure, part of the 30S ribosomal subunit. Contacts proteins S8 and S17. May interact with IF1 in the 30S initiation complex.

With S4 and S5 plays an important role in translational accuracy. Its function is as follows. Interacts with and stabilizes bases of the 16S rRNA that are involved in tRNA selection in the A site and with the mRNA backbone. Located at the interface of the 30S and 50S subunits, it traverses the body of the 30S subunit contacting proteins on the other side and probably holding the rRNA structure together. The combined cluster of proteins S8, S12 and S17 appears to hold together the shoulder and platform of the 30S subunit. In Thermobifida fusca (strain YX), this protein is Small ribosomal subunit protein uS12.